Here is a 429-residue protein sequence, read N- to C-terminus: E3 ubiquitin-protein ligase ZNRF4 (429 aa).

A signal peptide spans 1 to 27 (MPLCRPEHLMPRASRVPVAASLPLSHA). The Lumenal segment spans residues 28 to 250 (VIPTQLPSRP…PPCHDLGCHP (223 aa)). Residues 30–67 (PTQLPSRPGHRPPGRPRRCPKASCLPPPVGPSSTQTAK) are disordered. Residues 37-49 (PGHRPPGRPRRCP) are compositionally biased toward basic residues. Residues N107, N152, and N229 are each glycosylated (N-linked (GlcNAc...) asparagine). Residues 151–223 (GNRSLGAIVL…VSEAASQDLR (73 aa)) enclose the PA domain. A helical membrane pass occupies residues 251 to 271 (VLTVSWVLGCTLALVVSAFFV). Topologically, residues 272–429 (LNHLWLWAQA…SSAPPEAPGQ (158 aa)) are cytoplasmic. The RING-type; atypical zinc-finger motif lies at 309-352 (CAICLDEYEEGDQLKILPCSHTYHCKCIDPWFSQAPRRSCPVCK).

As to quaternary structure, interacts with CANX.

It is found in the endoplasmic reticulum membrane. It catalyses the reaction S-ubiquitinyl-[E2 ubiquitin-conjugating enzyme]-L-cysteine + [acceptor protein]-L-lysine = [E2 ubiquitin-conjugating enzyme]-L-cysteine + N(6)-ubiquitinyl-[acceptor protein]-L-lysine.. It participates in protein modification; protein ubiquitination. In terms of biological role, E3 ubiquitin-protein ligase that acts as a negative regulator of NOD2 signaling by mediating ubiquitination and degradation of RIPK2. Also catalyzes ubiquitination and proteasomal degradation of CANX within the endoplasmic reticulum. Could have a role in spermatogenesis. This chain is E3 ubiquitin-protein ligase ZNRF4, found in Homo sapiens (Human).